We begin with the raw amino-acid sequence, 360 residues long: Phenylalanine--tRNA ligase alpha subunit (360 aa).

Glu-260 lines the Mg(2+) pocket.

Belongs to the class-II aminoacyl-tRNA synthetase family. Phe-tRNA synthetase alpha subunit type 1 subfamily. In terms of assembly, tetramer of two alpha and two beta subunits. It depends on Mg(2+) as a cofactor.

It localises to the cytoplasm. The enzyme catalyses tRNA(Phe) + L-phenylalanine + ATP = L-phenylalanyl-tRNA(Phe) + AMP + diphosphate + H(+). This Bartonella tribocorum (strain CIP 105476 / IBS 506) protein is Phenylalanine--tRNA ligase alpha subunit.